Consider the following 300-residue polypeptide: Rhodopsin (300 aa).

Residues 1–18 (LHMIHLHWYQYPPMNPMM) are Extracellular-facing. Residues 19 to 43 (YPLLLVFMLITGILCLAGNFVTIWV) form a helical membrane-spanning segment. The Cytoplasmic portion of the chain corresponds to 44–55 (FMNTKSLRTPAN). The chain crosses the membrane as a helical span at residues 56–78 (LLVVNLAMSDFLMMFTMFPPMMV). The Extracellular segment spans residues 79-92 (TCYYHTWTLGATFC). Cysteine 92 and cysteine 168 are oxidised to a cystine. The helical transmembrane segment at 93 to 115 (QVYAFLGNLCGCASIWTMVFITF) threads the bilayer. Positions 116–118 (DRY) match the 'Ionic lock' involved in activated form stabilization motif. The Cytoplasmic segment spans residues 116–134 (DRYNVIVKGVAGEPLSTKK). The helical transmembrane segment at 135-155 (ASLWILTIWILSITWCIAPFF) threads the bilayer. Residues 156–181 (GWNRYVPEGNTGCGTDYLSEDILSRS) are Extracellular-facing. Residues 182-203 (YLYIYSTWVYFLPLAITIYCHV) traverse the membrane as a helical segment. Topologically, residues 204-244 (FIIKAVAAHEKGMRDQAKKMGIKSLRNEEAQKTSAECRLAK) are cytoplasmic. A helical membrane pass occupies residues 245–266 (IAMTTVALWFIAWTPYLLINWV). Over 267 to 277 (GMFARSYLSPV) the chain is Extracellular. The helical transmembrane segment at 278-299 (YTIWGYVFAKANAVYNPIVYAI) threads the bilayer. Lysine 287 bears the N6-(retinylidene)lysine mark.

The protein belongs to the G-protein coupled receptor 1 family. Opsin subfamily. Homodimer. Interacts with GNAQ. Contains one covalently linked retinal chromophore.

The protein resides in the cell projection. The protein localises to the rhabdomere membrane. Photoreceptor required for image-forming vision at low light intensity. Can use both retinal and 3-dehydroretinal as visual pigment. Light-induced isomerization of 11-cis to all-trans retinal triggers a conformational change that activates signaling via G-proteins. Signaling via GNAQ probably mediates the activation of phospholipase C. The polypeptide is Rhodopsin (RHO) (Cambarus maculatus (Freckled crayfish)).